Reading from the N-terminus, the 666-residue chain is MLRTCDITHIKNNYEAIIWKGERNCSTISTKYPNSAIFYKKRFIMLTPELGFAHSYNQQVKPLYTFCEKQRHLKNRKPLTILPSLTRKLQEMKFLPASDKSFESQYTEFLESFKILYREPLFLQIDGFIKDFRKWIKGEFNDFGDTRKIQLEPFQKNILIHVIFFIAVTKLPALANRVINYLTHVFDIEFVNESTLNTLKQKTNVFLVPRRHGKTWFIVPIISFLLKNIEGISIGYVAHQKHVSHFVMKEVEFKCRRMFPEKTITCLDNVITIDHQNIKSTALFASCYNTHSIRGQSFNLLIVDESHFIKKDAFSTILGFLPQASTKILFISSTNSGNHSTSFLMKLNNSPFEMLSVVSYVCEDHAHMLNERGNATACSCYRLHKPKFISINAEVKKTANLFLEGAFIHEIMGGATCNVINDVLITEQGQTEFEFFRYSTINKNLIPFLGKDLYVYLDPAYTGNRRASGTGIAAIGTYLDQYIVYGMEHYFLESLMTSSDTAIAECAAHMILSILDLHPFFTEVKIIIEGNSNQASAVKIACIIKENITANKSIQVTFFHTPDQNQIAQPFYLLGKEKKLAVEFFISNFNSGNIKASQELISFTIKITYDPVEYALEQIRNIHQISVNNYITYSAKKQACSDDLIIAIIMAIYVCSGNSSASFREI.

Residues 208–215 (VPRRHGKT) carry the Walker A motif motif. The Walker B motif signature appears at 300–305 (LLIVDE). Glu305 (for ATPase activity) is an active-site residue. Residues Asp458, Glu529, and Asp643 each act as for nuclease activity in the active site.

It belongs to the herpesviridae TRM3 protein family. In terms of assembly, interacts with the terminase subunits TRM1 and TRM2. Interacts with portal protein.

It is found in the host nucleus. Its function is as follows. Component of the molecular motor that translocates viral genomic DNA in empty capsid during DNA packaging. Forms a tripartite terminase complex together with TRM1 and TRM2 in the host cytoplasm. Once the complex reaches the host nucleus, it interacts with the capsid portal vertex. This portal forms a ring in which genomic DNA is translocated into the capsid. TRM3 carries an RNase H-like nuclease activity that plays an important role for the cleavage of concatemeric viral DNA into unit length genomes. The sequence is that of Tripartite terminase subunit 3 from Homo sapiens (Human).